A 222-amino-acid chain; its full sequence is MVLRSEILVNKNVMPTAEQALPGRDTPMSLPEFHYVFKDTPLLGPFFEGAIDFAIFGLGCFWGAERRFWQREGVVSTVVGYAGGFTPHPTYEEVCSGLTGHTEVVLVVFDKDKVSYRELLAMFWELHNPTQGMRQGNDIGTQYRSAIYCTSPEQLEQAKASRDAFQAELSKAGFGEITTEIDQAPTVYFAEAYHQQYLAKNPDGYCGIGGTGVCLPPSLQGN.

Cys60 is an active-site residue.

This sequence belongs to the MsrA Met sulfoxide reductase family.

It carries out the reaction L-methionyl-[protein] + [thioredoxin]-disulfide + H2O = L-methionyl-(S)-S-oxide-[protein] + [thioredoxin]-dithiol. It catalyses the reaction [thioredoxin]-disulfide + L-methionine + H2O = L-methionine (S)-S-oxide + [thioredoxin]-dithiol. In terms of biological role, has an important function as a repair enzyme for proteins that have been inactivated by oxidation. Catalyzes the reversible oxidation-reduction of methionine sulfoxide in proteins to methionine. This Pseudomonas putida (strain ATCC 47054 / DSM 6125 / CFBP 8728 / NCIMB 11950 / KT2440) protein is Peptide methionine sulfoxide reductase MsrA.